Reading from the N-terminus, the 470-residue chain is Probable tocopherol cyclase, chloroplastic (470 aa).

A chloroplast-targeting transit peptide spans 1–61 (MDLAAAAVAV…APTPRDRALR (61 aa)). Residues 14 to 48 (RPAPPPRRCAPRRHRRALAPRAASSSPSPSTAVAA) are disordered. The span at 22–31 (CAPRRHRRAL) shows a compositional bias: basic residues. The segment covering 32–48 (APRAASSSPSPSTAVAA) has biased composition (low complexity).

In terms of tissue distribution, expressed in the roots, stems, leaves and spikelets.

It localises to the plastid. It is found in the chloroplast. The protein resides in the plastoglobule. It participates in cofactor biosynthesis; tocopherol biosynthesis. Functionally, involved in the synthesis of both tocopherols and tocotrienols (vitamin E), which presumably protect photosynthetic complexes from oxidative stress. Catalyzes the conversion of 2-methyl-6-phytyl-1,4-hydroquinone and 2,3-dimethyl-5-phytyl-1,4-hydroquinone (DMPQ) to delta- and gamma-tocopherol respectively. Also converts 2,3-dimethyl-5-geranylgeranyl-1,4-hydroquinone (DMGQ) to gamma-tocotrienol. This is Probable tocopherol cyclase, chloroplastic (VTE1) from Oryza sativa subsp. japonica (Rice).